A 294-amino-acid polypeptide reads, in one-letter code: 4-hydroxy-tetrahydrodipicolinate synthase (294 aa).

Residue Thr44 participates in pyruvate binding. Tyr132 (proton donor/acceptor) is an active-site residue. Lys161 functions as the Schiff-base intermediate with substrate in the catalytic mechanism. Residue Ile206 participates in pyruvate binding.

It belongs to the DapA family. Homotetramer; dimer of dimers.

It localises to the cytoplasm. The catalysed reaction is L-aspartate 4-semialdehyde + pyruvate = (2S,4S)-4-hydroxy-2,3,4,5-tetrahydrodipicolinate + H2O + H(+). It functions in the pathway amino-acid biosynthesis; L-lysine biosynthesis via DAP pathway; (S)-tetrahydrodipicolinate from L-aspartate: step 3/4. Catalyzes the condensation of (S)-aspartate-beta-semialdehyde [(S)-ASA] and pyruvate to 4-hydroxy-tetrahydrodipicolinate (HTPA). The protein is 4-hydroxy-tetrahydrodipicolinate synthase of Thermotoga sp. (strain RQ2).